The following is a 72-amino-acid chain: Neuropeptide IMFamide (72 aa).

The signal sequence occupies residues 1–24 (MMRFTIGVVCLVAVLLSLAEVSEA). Residue Phe36 is modified to Phenylalanine amide. Residues 40-72 (GPTEYDQRGKTFTALCEIATEACQAWFPSTENK) constitute a propeptide that is removed on maturation.

Expressed in corpora cardiaca (CC), corpora allata (CA), antennal lobe (AL) and gnathal ganglion (GNG) (at protein level). Expression detected in only a few animals (at protein level).

It localises to the secreted. The sequence is that of Neuropeptide IMFamide from Agrotis ipsilon (Black cutworm moth).